We begin with the raw amino-acid sequence, 441 residues long: Cysteine proteinase (441 aa).

A disulfide bond links C249 and C290. C252 is an active-site residue. 2 N-linked (GlcNAc...) asparagine glycosylation sites follow: N270 and N345. Residues H381 and N403 contribute to the active site.

This sequence belongs to the peptidase C1 family.

This is Cysteine proteinase (TACP) from Theileria annulata.